A 407-amino-acid polypeptide reads, in one-letter code: Substance-P receptor (407 aa).

Residues 1 to 31 (MDNVLPVDSDLSPNISTNTSEPNQFVQPAWQ) lie on the Extracellular side of the membrane. 2 N-linked (GlcNAc...) asparagine glycosylation sites follow: N14 and N18. The helical transmembrane segment at 32-54 (IVLWAAAYTVIVVTSVVGNVVVM) threads the bilayer. Topologically, residues 55-64 (WIILAHKRMR) are cytoplasmic. Residues 65 to 86 (TVTNYFLVNLAFAEASMAAFNT) form a helical membrane-spanning segment. Over 87–106 (VVNFTYAVHNEWYYGLFYCK) the chain is Extracellular. C105 and C180 are disulfide-bonded. The chain crosses the membrane as a helical span at residues 107-128 (FHNFFPIAAVFASIYSMTAVAF). Residues 129–148 (DRYMAIIHPLQPRLSATATK) are Cytoplasmic-facing. A helical membrane pass occupies residues 149 to 169 (VVICVIWVLALLLAFPQGYYS). The Extracellular segment spans residues 170–194 (TTETMPSRVVCMIEWPEHPNKIYEK). A helical membrane pass occupies residues 195–219 (VYHICVTVLIYFLPLLVIGYAYTVV). H197 is a binding site for CP-96345. The Cytoplasmic portion of the chain corresponds to 220–248 (GITLWASEIPGDSSDRYHEQVSAKRKVVK). The chain crosses the membrane as a helical span at residues 249-270 (MMIVVVCTFAICWLPFHIFFLL). Over 271–283 (PYINPDLYLKKFI) the chain is Extracellular. Residues 284–308 (QQVYLAIMWLAMSSTMYNPIIYCCL) traverse the membrane as a helical segment. At 309 to 407 (NDRFRLGFKH…SFSFSSNVLS (99 aa)) the chain is on the cytoplasmic side. C322 carries S-palmitoyl cysteine lipidation. The tract at residues 364–407 (AHEEEPEDGPKATPSSLDLTSNCSSRSDSKTMTESFSFSSNVLS) is disordered. Residues 376 to 407 (TPSSLDLTSNCSSRSDSKTMTESFSFSSNVLS) are compositionally biased toward polar residues.

The protein belongs to the G-protein coupled receptor 1 family. As to quaternary structure, interacts with ARRB1.

It is found in the cell membrane. This is a receptor for the tachykinin neuropeptide substance P. It is probably associated with G proteins that activate a phosphatidylinositol-calcium second messenger system. The rank order of affinity of this receptor to tachykinins is: substance P &gt; substance K &gt; neuromedin-K. This chain is Substance-P receptor (TACR1), found in Homo sapiens (Human).